The chain runs to 228 residues: MSNYPLHQACMENEFFKVQELLHSKPSLLLQKDQDGRIPLHWSVSFQAHEITSFLLSKMENVNLDDYPDDSGWTPFHIACSVGNLEVVKSLYDRPLKPDLNKITNQGVTCLHLAVGKKWFEVSQFLIENGASVRIKDKFNQIPLHRAASVGSLKLIELLCGLGKSAVNWQDKQGWTPLFHALAEGHGDAAVLLVEKYGAEYDLVDNKGAKAEDVALNEQVKKFFLNNV.

ANK repeat units follow at residues 1 to 30, 35 to 64, 71 to 100, 106 to 135, 139 to 168, and 173 to 203; these read MSNY…SLLL, DGRI…NVNL, SGWT…KPDL, QGVT…SVRI, FNQI…SAVN, and QGWT…EYDL.

Interacts with RPT3.

In terms of biological role, acts as a chaperone during the assembly of the 26S proteasome, specifically of the 19S regulatory complex (RC) and appears to have an overlapping role with RPN14. The polypeptide is Probable 26S proteasome regulatory subunit p28 (NAS6) (Saccharomyces cerevisiae (strain ATCC 204508 / S288c) (Baker's yeast)).